The sequence spans 394 residues: ATP-dependent RNA helicase fal1 (394 aa).

A Q motif motif is present at residues 21–49; it reads SSFEEMNLKEDLLRGIYAYGYETPSAVQS. Residues 52 to 222 enclose the Helicase ATP-binding domain; that stretch reads IIQICKGRDV…NKFTTNPVRI (171 aa). ATP is bound at residue 65–72; sequence AQSGTGKT. At Ser67 the chain carries Phosphoserine. The short motif at 170–173 is the DEAD box element; that stretch reads DEAD. In terms of domain architecture, Helicase C-terminal spans 233–394; sequence GLKQYFIAVE…EMPMNIGDMV (162 aa).

Belongs to the DEAD box helicase family. DDX48/FAL1 subfamily.

It localises to the nucleus. The protein resides in the nucleolus. The catalysed reaction is ATP + H2O = ADP + phosphate + H(+). In terms of biological role, ATP-dependent RNA helicase involved in 40S ribosomal subunit biogenesis. Required for the processing and cleavage of 35S pre-rRNA at sites A0, A1, and A2, leading to mature 18S rRNA. The polypeptide is ATP-dependent RNA helicase fal1 (tif412) (Schizosaccharomyces pombe (strain 972 / ATCC 24843) (Fission yeast)).